A 496-amino-acid polypeptide reads, in one-letter code: Cyclin-dependent kinase 16 (496 aa).

The disordered stretch occupies residues 1–95; the sequence is MDRMKKIKRQ…SATSSDEVQS (95 aa). Residue serine 12 is modified to Phosphoserine; by BRSK2. A phosphoserine mark is found at serine 36, serine 42, serine 64, serine 65, serine 78, serine 82, and serine 89. Residues 69–78 are compositionally biased toward basic and acidic residues; that stretch reads IVHEDMKMGS. A compositionally biased stretch (polar residues) spans 83–93; that stretch reads DQASATSSDEV. Serine 95 carries the phosphoserine; by CDK5 modification. A phosphoserine mark is found at serine 110, serine 119, serine 138, serine 146, serine 153, and serine 155. The Protein kinase domain occupies 165 to 446; the sequence is YIKLDKLGEG…AEDARKHPFF (282 aa). ATP is bound by residues 171–179 and lysine 194; that span reads LGEGTYATV. A Phosphothreonine modification is found at threonine 175. Aspartate 286 acts as the Proton acceptor in catalysis. The residue at position 380 (threonine 380) is a Phosphothreonine. Phosphoserine is present on residues serine 391, serine 478, and serine 480.

The protein belongs to the protein kinase superfamily. CMGC Ser/Thr protein kinase family. CDC2/CDKX subfamily. Found in a complex containing CABLES1, CDK17 and TDRD7. Interacts with BRSK2. Identified in a complex with NSF, syntaxin-1, synaptotagmin, SYN1, SYP and CDK5R1. Interacts with YWHAH, YWHAQ and YWHAZ. Interacts with CCNY; this interaction increases the CDK16 kinase activity. Interacts with CCNYL1; this interaction mutually increases the stability of CDK16 and CCNYL1 and increases the kinase activity of CDK16. Interacts with NSF. Phosphorylation of CDK16 is essential for the binding of CCNY, but also essential for the regulation of CDK16 kinase activity. Phosphorylation of CDK16 is essential for the binding of CCNYl1, but also essential for the regulation of CDK16 kinase activity. Ser-146 and Ser-153 are the critical sites for the binding of CCNYL1 and for modulating CDK16 kinase activity. Phosphorylation at Ser-153 inhibits kinase activity. As to expression, highly expressed in testis and brain, and detected at lower levels in heart, skeletal muscle, adipose tissue, lung, spleen and pancreas (at protein level). Ubiquitous with highest levels in testis and brain, with longer form predominant in all tissues except the testis.

It localises to the cytoplasm. The protein localises to the cytoplasmic vesicle. Its subcellular location is the secretory vesicle. It is found in the cell membrane. The protein resides in the synapse. It localises to the synaptosome. The enzyme catalyses L-seryl-[protein] + ATP = O-phospho-L-seryl-[protein] + ADP + H(+). It carries out the reaction L-threonyl-[protein] + ATP = O-phospho-L-threonyl-[protein] + ADP + H(+). In terms of biological role, protein kinase that plays a role in vesicle-mediated transport processes and exocytosis. Can phosphorylate CCNY at 'Ser-336' (in vitro). Plays a role in the regulation of insulin secretion in response to changes in blood glucose levels. Regulates GH1 release by brain neurons. Phosphorylates NSF, and thereby regulates NSF oligomerization. Required for normal spermatogenesis. Regulates neuron differentiation and dendrite development. In Mus musculus (Mouse), this protein is Cyclin-dependent kinase 16 (Cdk16).